The chain runs to 379 residues: Leukocyte elastase inhibitor (379 aa).

M1 carries the post-translational modification N-acetylmethionine. N6-acetyllysine occurs at positions 137 and 177. Residues 351–379 (NFNADHPFIFFIRHNPSANILFLGRFSSP) form a CARD-binding motif (CBM) region.

The protein belongs to the serpin family. Ov-serpin subfamily. Monomer. Interacts (via C-terminus) with CASP1; CASP4 (via CARD domain) and CASP5; these interactions regulate the activity of inflammatory caspases. Interacts with PRTN3. Interacts with GZMH. Interacts with TMSB4. The N-terminus is blocked.

It is found in the secreted. It localises to the cytoplasm. Its subcellular location is the cytolytic granule. The protein resides in the early endosome. Neutrophil serine protease inhibitor that plays an essential role in the regulation of the innate immune response, inflammation and cellular homeostasis. Acts primarily to protect the cell from proteases released in the cytoplasm during stress or infection. These proteases are important in killing microbes but when released from granules, these potent enzymes also destroy host proteins and contribute to mortality. Regulates the activity of the neutrophil proteases elastase, cathepsin G, proteinase-3, chymase, chymotrypsin, and kallikrein-3. Also acts as a potent intracellular inhibitor of GZMH by directly blocking its proteolytic activity. During inflammation, limits the activity of inflammatory caspases CASP1, CASP4 and CASP5 by suppressing their caspase-recruitment domain (CARD) oligomerization and enzymatic activation. When secreted, promotes the proliferation of beta-cells via its protease inhibitory function. The sequence is that of Leukocyte elastase inhibitor (SERPINB1) from Equus caballus (Horse).